Reading from the N-terminus, the 113-residue chain is Hydrogenase maturation factor HypA (113 aa).

A Ni(2+)-binding site is contributed by histidine 2. 4 residues coordinate Zn(2+): cysteine 73, cysteine 76, cysteine 89, and cysteine 92.

It belongs to the HypA/HybF family.

Its function is as follows. Involved in the maturation of [NiFe] hydrogenases. Required for nickel insertion into the metal center of the hydrogenase. The polypeptide is Hydrogenase maturation factor HypA (Alkalilimnicola ehrlichii (strain ATCC BAA-1101 / DSM 17681 / MLHE-1)).